A 377-amino-acid chain; its full sequence is Succinyl-diaminopimelate desuccinylase (377 aa).

Zn(2+) is bound at residue His66. The active site involves Asp68. Zn(2+) is bound at residue Asp99. Residue Glu133 is the Proton acceptor of the active site. Positions 134, 162, and 348 each coordinate Zn(2+).

It belongs to the peptidase M20A family. DapE subfamily. As to quaternary structure, homodimer. Requires Zn(2+) as cofactor. Co(2+) is required as a cofactor.

It catalyses the reaction N-succinyl-(2S,6S)-2,6-diaminopimelate + H2O = (2S,6S)-2,6-diaminopimelate + succinate. It functions in the pathway amino-acid biosynthesis; L-lysine biosynthesis via DAP pathway; LL-2,6-diaminopimelate from (S)-tetrahydrodipicolinate (succinylase route): step 3/3. Catalyzes the hydrolysis of N-succinyl-L,L-diaminopimelic acid (SDAP), forming succinate and LL-2,6-diaminopimelate (DAP), an intermediate involved in the bacterial biosynthesis of lysine and meso-diaminopimelic acid, an essential component of bacterial cell walls. The protein is Succinyl-diaminopimelate desuccinylase of Methylococcus capsulatus (strain ATCC 33009 / NCIMB 11132 / Bath).